A 706-amino-acid polypeptide reads, in one-letter code: Polyribonucleotide nucleotidyltransferase (706 aa).

Asp485 and Asp491 together coordinate Mg(2+). Residues 552–611 (PRMLKMKIHPDKIREVIGSGGKTINKIIEDTGVKIDIENDGTIFIAAQTQEAGELALSII) enclose the KH domain. In terms of domain architecture, S1 motif spans 621-689 (GDIFKGKVIK…QQGKVSLSRK (69 aa)).

This sequence belongs to the polyribonucleotide nucleotidyltransferase family. The cofactor is Mg(2+).

Its subcellular location is the cytoplasm. The enzyme catalyses RNA(n+1) + phosphate = RNA(n) + a ribonucleoside 5'-diphosphate. Its function is as follows. Involved in mRNA degradation. Catalyzes the phosphorolysis of single-stranded polyribonucleotides processively in the 3'- to 5'-direction. The chain is Polyribonucleotide nucleotidyltransferase from Alkaliphilus oremlandii (strain OhILAs) (Clostridium oremlandii (strain OhILAs)).